Here is a 422-residue protein sequence, read N- to C-terminus: 5-hydroxytryptamine receptor 1A (422 aa).

A disordered region spans residues 1 to 23; sequence MDVLSPGQGNNTTSPPAPFETGG. The Extracellular segment spans residues 1–38; sequence MDVLSPGQGNNTTSPPAPFETGGNTTGISDVTFSYQVI. N-linked (GlcNAc...) asparagine glycans are attached at residues asparagine 10, asparagine 11, and asparagine 24. The chain crosses the membrane as a helical span at residues 39–59; sequence TSLLLGTLIFCAVLGNACVVA. The Cytoplasmic segment spans residues 60–73; sequence AIALERSLQNVANY. Residues 74–98 traverse the membrane as a helical segment; sequence LIGSLAVTDLMVSVLVLPMAALYQV. The Extracellular portion of the chain corresponds to 99 to 107; that stretch reads LNKWTLGQV. The helical transmembrane segment at 108–132 threads the bilayer; it reads TCDLFIALDVLCCTSSILHLCAIAL. Cysteine 109 and cysteine 187 are oxidised to a cystine. Positions 116 and 120 each coordinate serotonin. The short motif at 133–135 is the DRY motif; important for ligand-induced conformation changes element; it reads DRY. At 133-152 the chain is on the cytoplasmic side; it reads DRYWAITDPIDYVNKRTPRR. Residues 153–174 form a helical membrane-spanning segment; the sequence is AAALISLTWLIGFLISIPPMLG. Residues 175 to 193 lie on the Extracellular side of the membrane; the sequence is WRTPEDRSDPDACTISKDH. The helical transmembrane segment at 194–216 threads the bilayer; it reads GYTIYSTFGAFYIPLLLMLVLYG. Over 217–346 the chain is Cytoplasmic; the sequence is RIFRAARFRI…LARERKTVKT (130 aa). The disordered stretch occupies residues 235 to 263; sequence KTGADTHHGASPAPQPKKSVNGESGSRNW. Residues threonine 314, lysine 345, threonine 346, and glycine 352 each coordinate 1D-myo-inositol 4-phosphate. The helical transmembrane segment at 347–370 threads the bilayer; the sequence is LGIIMGTFILCWLPFFIVALVLPF. Residues 371 to 378 are Extracellular-facing; the sequence is CESSCHMP. Residues 379 to 403 form a helical membrane-spanning segment; it reads TLLGAIINWLGYSNSLLNPVIYAYF. Residues 396–400 carry the NPxxY motif; important for ligand-induced conformation changes and signaling motif; it reads NPVIY. Phenylalanine 403, asparagine 404, and lysine 405 together coordinate 1D-myo-inositol 4-phosphate. Residues 404 to 422 lie on the Cytoplasmic side of the membrane; the sequence is NKDFQNAFKKIIKCKFCRQ.

This sequence belongs to the G-protein coupled receptor 1 family. 5-hydroxytryptamine receptor subfamily. HTR1A sub-subfamily. As to quaternary structure, heterodimer; heterodimerizes with GPER1. Interacts with YIF1B. Interacts with GPR39 and GALR1.

Its subcellular location is the cell membrane. The protein localises to the cell projection. The protein resides in the dendrite. With respect to regulation, G-protein coupled receptor activity is regulated by lipids: phosphatidylinositol 4-phosphate increases HTR1A-mediated activity. G-protein coupled receptor for 5-hydroxytryptamine (serotonin). Also functions as a receptor for various drugs and psychoactive substances. Ligand binding causes a conformation change that triggers signaling via guanine nucleotide-binding proteins (G proteins) and modulates the activity of downstream effectors, such as adenylate cyclase. HTR1A is coupled to G(i)/G(o) G alpha proteins and mediates inhibitory neurotransmission: signaling inhibits adenylate cyclase activity and activates a phosphatidylinositol-calcium second messenger system that regulates the release of Ca(2+) ions from intracellular stores. Beta-arrestin family members regulate signaling by mediating both receptor desensitization and resensitization processes. This Pongo pygmaeus (Bornean orangutan) protein is 5-hydroxytryptamine receptor 1A (HTR1A).